A 638-amino-acid polypeptide reads, in one-letter code: MYQWLAQSLGNVSVNRKLGLGFGLVLLLTLAITLTGWHGMDSIIDRGDKLGNISVIQQYTQELRIARQQYDRRRDDASLAELEKALSNLDRQVQLMLGQIEQPADHQRLEQQREAVRIYQQAFNELKQADQRREASRDVLGSSADKAVDLIGRVQRSLLQGANINQYQHAVDVSALLQQARFQVRGYTYSGNADYQQTALKAIDQALAELRALPAKVPAEHAASLDDAATAMGGYRDAVTQFGNAQLASEQALQRMVEQGTVLLQASQMMTASQTEVRDAAAAQAKTLLTVATVLALALGLLAAWAITRQIIIPLRQTLRAAERVASGDLTQSLQVQRRDELGQLQASMHRMTQGLRELIGGIGDGVTQIASAAEELSAVTEQTSAGVNNQKVETDQVATAMNQMTATVHEVARNAEQASEAALMADQQAREGDRVVGEAVAQIERLASEVVNSSEAMNLLKTESDKIGSVLDVIKSVAQQTNLLALNAAIEAARAGEAGRGFAVVADEVRSLAQRTQQSTEEIEELIAGLQSGTQRVASVMDNSRQLTDSSVELTRRAGSSLETITRTVSSIQAMNQQIATAAEEQTAVAEEINRSVMNVRDISDQTSAASEETASSSVELARLGTHLQGLVGRFRL.

Residues 18–38 (LGLGFGLVLLLTLAITLTGWH) form a helical membrane-spanning segment. Residues 45 to 282 (DRGDKLGNIS…SQTEVRDAAA (238 aa)) form the HBM domain. The helical transmembrane segment at 287–307 (TLLTVATVLALALGLLAAWAI) threads the bilayer. One can recognise an HAMP domain in the interval 309-361 (RQIIIPLRQTLRAAERVASGDLTQSLQVQRRDELGQLQASMHRMTQGLRELIG). Residues 366–602 (GVTQIASAAE…EINRSVMNVR (237 aa)) form the Methyl-accepting transducer domain.

This sequence belongs to the methyl-accepting chemotaxis (MCP) protein family.

The protein localises to the cell membrane. Functionally, chemotactic-signal transducers respond to changes in the concentration of attractants and repellents in the environment, transduce a signal from the outside to the inside of the cell, and facilitate sensory adaptation through the variation of the level of methylation. McpQ recognizes specifically citrate and citrate/metal(2+) complexes. Binds citrate/metal(2+) complexes with higher affinity than free citrate, and mediates preferentially chemotaxis toward citrate/metal(2+) complexes. This Pseudomonas putida (strain ATCC 47054 / DSM 6125 / CFBP 8728 / NCIMB 11950 / KT2440) protein is Methyl-accepting chemotaxis protein McpQ.